Reading from the N-terminus, the 325-residue chain is GMP reductase (325 aa).

Catalysis depends on Cys173, which acts as the Thioimidate intermediate. 202–225 is a binding site for NADP(+); it reads IIADGGIRDHGDIAKSVRFGASMV.

This sequence belongs to the IMPDH/GMPR family. GuaC type 2 subfamily.

The catalysed reaction is IMP + NH4(+) + NADP(+) = GMP + NADPH + 2 H(+). Its function is as follows. Catalyzes the irreversible NADPH-dependent deamination of GMP to IMP. It functions in the conversion of nucleobase, nucleoside and nucleotide derivatives of G to A nucleotides, and in maintaining the intracellular balance of A and G nucleotides. In Variovorax paradoxus (strain S110), this protein is GMP reductase.